Reading from the N-terminus, the 243-residue chain is Bidirectional sugar transporter SWEET2a (243 aa).

At 1 to 23 the chain is on the extracellular side; that stretch reads MDWAAPALTSFVADSSYRHLCCY. Residues 24-44 traverse the membrane as a helical segment; the sequence is GAGIAGNVFAFVLFISPLPTF. The MtN3/slv 1 domain occupies 24-111; the sequence is GAGIAGNVFA…AVFIAFADAK (88 aa). Topologically, residues 45–57 are cytoplasmic; that stretch reads KRIVRNGSTEQFS. The chain crosses the membrane as a helical span at residues 58–80; that stretch reads AMPYIYSLLNCLICMWYGLPFVS. The Extracellular segment spans residues 81–89; the sequence is YGVVLVATV. Residues 90–110 traverse the membrane as a helical segment; sequence NSIGAVFQLAYTAVFIAFADA. Topologically, residues 111–117 are cytoplasmic; sequence KQRLKVS. A helical transmembrane segment spans residues 118–138; that stretch reads ALLAAVFVVFGLIVFVSLALL. At 139-145 the chain is on the extracellular side; that stretch reads DHPTRQM. The helical transmembrane segment at 146 to 166 threads the bilayer; sequence FVGYLSVASLIFMFASPLSII. Residues 147-230 enclose the MtN3/slv 2 domain; sequence VGYLSVASLI…VLYAYFRKGS (84 aa). Over 167–179 the chain is Cytoplasmic; it reads NLVIRTKSVEYMP. A helical transmembrane segment spans residues 180–200; the sequence is FYLSLSMFLMSASFFGYGVLL. Residues 201–202 are Extracellular-facing; that stretch reads ND. Residues 203–223 form a helical membrane-spanning segment; it reads FFIYIPNGIGTILGIIQLVLY. Residues 224 to 243 are Cytoplasmic-facing; it reads AYFRKGSSEEAKLPLLVTHT.

Belongs to the SWEET sugar transporter family. Forms homooligomers and/or heterooligomers.

Its subcellular location is the cell membrane. Functionally, mediates both low-affinity uptake and efflux of sugar across the plasma membrane. The protein is Bidirectional sugar transporter SWEET2a of Sorghum bicolor (Sorghum).